A 317-amino-acid polypeptide reads, in one-letter code: AT-hook motif nuclear-localized protein 22 (317 aa).

Disordered stretches follow at residues 22-41 (HHQF…HDID) and 48-106 (LKRD…KPPI). Positions 26-35 (QHQQQQQQQN) are enriched in low complexity. Residues 48-64 (LKRDRDADIDPNEHSSA) are compositionally biased toward basic and acidic residues. A compositionally biased stretch (gly residues) spans 72–84 (GSGGESGGGGGGD). Positions 89-101 (RRPRGRPAGSKNK) form a DNA-binding region, a.T hook. One can recognise a PPC domain in the interval 113–253 (ANALKSHVME…EDDQEEQTAG (141 aa)). Residues 258-285 (NIDGNATMGGGTQTQTQTQQQQQQQLMQ) are disordered. Positions 270 to 282 (QTQTQTQQQQQQQ) are enriched in low complexity.

As to quaternary structure, homodimer. Interacts with HDA1/HDA19, HDA6 and HDA9. Expressed at the hypocotyl-root transition zone and the root hair zone. Also detected in the inflorescence.

The protein localises to the nucleus. In terms of biological role, transcription factor that specifically binds AT-rich DNA sequences related to the nuclear matrix attachment regions (MARs). Binds an AT-rich DNA sequences in the FLOWERING LOCUS T (FT) promoter. Acts redundantly with AHL18, AHL27 and AHL29 in the regulation of flowering and regulation of the hypocotyl elongation. Plays a role in both photo- and skotomorphogenesis. Acts as a chromatin remodeling factor that modifies the architecture of FLOWERING LOCUS T (FT) chromatin by modulating both H3 acetylation and methylation leading to the regulation of FT expression during flowering induction. The protein is AT-hook motif nuclear-localized protein 22 of Arabidopsis thaliana (Mouse-ear cress).